Here is an 812-residue protein sequence, read N- to C-terminus: Phenylalanine--tRNA ligase beta subunit (812 aa).

Residues 39–155 (SKTFAPFTIA…ADAPVGAGYA (117 aa)) form the tRNA-binding domain. Positions 405–480 (PEDRVIDFPL…RIVGVDKVPM (76 aa)) constitute a B5 domain. The Mg(2+) site is built by D458, D464, E467, and E468. One can recognise an FDX-ACB domain in the interval 718–811 (PAFQPVSRDF…VAKRTGGSLR (94 aa)).

Belongs to the phenylalanyl-tRNA synthetase beta subunit family. Type 1 subfamily. Tetramer of two alpha and two beta subunits. Mg(2+) serves as cofactor.

The protein localises to the cytoplasm. It carries out the reaction tRNA(Phe) + L-phenylalanine + ATP = L-phenylalanyl-tRNA(Phe) + AMP + diphosphate + H(+). The protein is Phenylalanine--tRNA ligase beta subunit of Nitrobacter winogradskyi (strain ATCC 25391 / DSM 10237 / CIP 104748 / NCIMB 11846 / Nb-255).